We begin with the raw amino-acid sequence, 240 residues long: Glutathione S-transferase theta-1 (240 aa).

One can recognise a GST N-terminal domain in the interval 2–82 (GLELYLDLLS…YLARKYKVPD (81 aa)). Glutathione-binding positions include His40, 53–54 (KV), and 66–67 (ES). Residues 88 to 226 (DLQACARVDE…AKDSQPADPT (139 aa)) enclose the GST C-terminal domain.

The protein belongs to the GST superfamily. Theta family. As to quaternary structure, homodimer.

The protein localises to the cytoplasm. It carries out the reaction RX + glutathione = an S-substituted glutathione + a halide anion + H(+). In terms of biological role, conjugation of reduced glutathione to a wide number of exogenous and endogenous hydrophobic electrophiles. Also binds steroids, bilirubin, carcinogens and numerous organic anions. Has dichloromethane dehalogenase activity. The polypeptide is Glutathione S-transferase theta-1 (GSTT1) (Bos taurus (Bovine)).